The chain runs to 35 residues: Photosystem II reaction center protein Psb30 (35 aa).

The helical transmembrane segment at 7 to 27 (VFVQLALLALIVLAGPAVILL) threads the bilayer.

Belongs to the Psb30/Ycf12 family. In terms of assembly, PSII is composed of 1 copy each of membrane proteins PsbA, PsbB, PsbC, PsbD, PsbE, PsbF, PsbH, PsbI, PsbJ, PsbK, PsbL, PsbM, PsbT, PsbX, PsbY, PsbZ, Psb30/Ycf12, peripheral proteins PsbO, CyanoQ (PsbQ), PsbU, PsbV and a large number of cofactors. It forms dimeric complexes.

It localises to the cellular thylakoid membrane. Functionally, a core subunit of photosystem II (PSII), probably helps stabilize the reaction center. The protein is Photosystem II reaction center protein Psb30 of Synechococcus sp. (strain JA-2-3B'a(2-13)) (Cyanobacteria bacterium Yellowstone B-Prime).